A 70-amino-acid chain; its full sequence is Turripeptide Gsg9.2 (70 aa).

The first 20 residues, 1–20, serve as a signal peptide directing secretion; it reads MKVYCLLLVLLVGLVSQAHG. In terms of domain architecture, Kazal-like spans 21 to 70; the sequence is QLDKKCQMVCTMDYRPVCGSDGRTYPNKCTLTSTACMSQRSITVFHDGEC. 3 disulfide bridges follow: Cys26–Cys56, Cys30–Cys49, and Cys38–Cys70.

It belongs to the conopeptide P-like superfamily. Expressed by the venom duct.

It is found in the secreted. Functionally, acts as a neurotoxin by inhibiting an ion channel. May also act as a serine protease inhibitor, since it possess the kazal serine protease inhibitor signature. This chain is Turripeptide Gsg9.2, found in Gemmula sogodensis (Gem-turris).